The chain runs to 89 residues: MVMDIEAKKAVIDAHAKHEGDTGSPEVQVALLTARIEQLTGHFKVHKKDYHSRTGLLKLVGQRRKLLNYLKKKDVQRYRALIEKLGLRK.

Belongs to the universal ribosomal protein uS15 family. In terms of assembly, part of the 30S ribosomal subunit. Forms a bridge to the 50S subunit in the 70S ribosome, contacting the 23S rRNA.

One of the primary rRNA binding proteins, it binds directly to 16S rRNA where it helps nucleate assembly of the platform of the 30S subunit by binding and bridging several RNA helices of the 16S rRNA. Its function is as follows. Forms an intersubunit bridge (bridge B4) with the 23S rRNA of the 50S subunit in the ribosome. The protein is Small ribosomal subunit protein uS15 of Nitratidesulfovibrio vulgaris (strain DP4) (Desulfovibrio vulgaris).